The primary structure comprises 32 residues: Photosystem II reaction center protein T (32 aa).

A helical membrane pass occupies residues 3–23 (AFAYVLILTLAVVTLFFAVAF).

The protein belongs to the PsbT family. PSII is composed of 1 copy each of membrane proteins PsbA, PsbB, PsbC, PsbD, PsbE, PsbF, PsbH, PsbI, PsbJ, PsbK, PsbL, PsbM, PsbT, PsbX, PsbY, Psb30/Ycf12, peripheral proteins PsbO, CyanoQ (PsbQ), PsbU, PsbV and a large number of cofactors. It forms dimeric complexes.

The protein localises to the cellular thylakoid membrane. Functionally, found at the monomer-monomer interface of the photosystem II (PS II) dimer, plays a role in assembly and dimerization of PSII. PSII is a light-driven water plastoquinone oxidoreductase, using light energy to abstract electrons from H(2)O, generating a proton gradient subsequently used for ATP formation. This Prochlorococcus marinus (strain MIT 9301) protein is Photosystem II reaction center protein T.